A 536-amino-acid chain; its full sequence is Xylulose kinase (536 aa).

Substrate contacts are provided by histidine 99, arginine 170, aspartate 280, and asparagine 281. ATP contacts are provided by residues tryptophan 355, glycine 441–alanine 442, and asparagine 445.

The protein belongs to the FGGY kinase family. Monomer.

The enzyme catalyses D-xylulose + ATP = D-xylulose 5-phosphate + ADP + H(+). Phosphorylates D-xylulose to produce D-xylulose 5-phosphate, a molecule that may play an important role in the regulation of glucose metabolism and lipogenesis. The polypeptide is Xylulose kinase (XYLB) (Homo sapiens (Human)).